The following is a 377-amino-acid chain: Queuine tRNA-ribosyltransferase (377 aa).

D89 functions as the Proton acceptor in the catalytic mechanism. Residues 89 to 93 (DSGGF), D143, Q187, and G214 each bind substrate. Residues 245–251 (GVGKPED) are RNA binding. The Nucleophile role is filled by D264. The RNA binding; important for wobble base 34 recognition stretch occupies residues 269-273 (TRNAR). Zn(2+) contacts are provided by C302, C304, C307, and H333.

It belongs to the queuine tRNA-ribosyltransferase family. As to quaternary structure, homodimer. Within each dimer, one monomer is responsible for RNA recognition and catalysis, while the other monomer binds to the replacement base PreQ1. It depends on Zn(2+) as a cofactor.

The enzyme catalyses 7-aminomethyl-7-carbaguanine + guanosine(34) in tRNA = 7-aminomethyl-7-carbaguanosine(34) in tRNA + guanine. The protein operates within tRNA modification; tRNA-queuosine biosynthesis. Catalyzes the base-exchange of a guanine (G) residue with the queuine precursor 7-aminomethyl-7-deazaguanine (PreQ1) at position 34 (anticodon wobble position) in tRNAs with GU(N) anticodons (tRNA-Asp, -Asn, -His and -Tyr). Catalysis occurs through a double-displacement mechanism. The nucleophile active site attacks the C1' of nucleotide 34 to detach the guanine base from the RNA, forming a covalent enzyme-RNA intermediate. The proton acceptor active site deprotonates the incoming PreQ1, allowing a nucleophilic attack on the C1' of the ribose to form the product. After dissociation, two additional enzymatic reactions on the tRNA convert PreQ1 to queuine (Q), resulting in the hypermodified nucleoside queuosine (7-(((4,5-cis-dihydroxy-2-cyclopenten-1-yl)amino)methyl)-7-deazaguanosine). The protein is Queuine tRNA-ribosyltransferase of Shewanella sediminis (strain HAW-EB3).